The sequence spans 337 residues: tRNA N6-adenosine threonylcarbamoyltransferase (337 aa).

Fe cation-binding residues include histidine 114 and histidine 118. Residues 136 to 140 (LVSGG), aspartate 169, glycine 182, aspartate 186, and asparagine 275 each bind substrate. A Fe cation-binding site is contributed by aspartate 301.

This sequence belongs to the KAE1 / TsaD family. Requires Fe(2+) as cofactor.

Its subcellular location is the cytoplasm. It catalyses the reaction L-threonylcarbamoyladenylate + adenosine(37) in tRNA = N(6)-L-threonylcarbamoyladenosine(37) in tRNA + AMP + H(+). In terms of biological role, required for the formation of a threonylcarbamoyl group on adenosine at position 37 (t(6)A37) in tRNAs that read codons beginning with adenine. Is involved in the transfer of the threonylcarbamoyl moiety of threonylcarbamoyl-AMP (TC-AMP) to the N6 group of A37, together with TsaE and TsaB. TsaD likely plays a direct catalytic role in this reaction. The chain is tRNA N6-adenosine threonylcarbamoyltransferase from Streptococcus thermophilus (strain ATCC BAA-491 / LMD-9).